The chain runs to 504 residues: Maturase K (504 aa).

The protein belongs to the intron maturase 2 family. MatK subfamily.

The protein localises to the plastid. It localises to the chloroplast. Usually encoded in the trnK tRNA gene intron. Probably assists in splicing its own and other chloroplast group II introns. This chain is Maturase K, found in Mentzelia laevicaulis (Blazing star).